We begin with the raw amino-acid sequence, 365 residues long: Probable dual-specificity RNA methyltransferase RlmN (365 aa).

Glu-108 serves as the catalytic Proton acceptor. The Radical SAM core domain maps to 114-352; that stretch reads YPDRNTVCIS…SCTVRDTRGR (239 aa). Cys-121 and Cys-358 are oxidised to a cystine. The [4Fe-4S] cluster site is built by Cys-128, Cys-132, and Cys-135. S-adenosyl-L-methionine-binding positions include 179-180, Ser-213, 236-238, and Asn-315; these read GE and SLH. The active-site S-methylcysteine intermediate is Cys-358.

Belongs to the radical SAM superfamily. RlmN family. [4Fe-4S] cluster serves as cofactor.

It is found in the cytoplasm. It catalyses the reaction adenosine(2503) in 23S rRNA + 2 reduced [2Fe-2S]-[ferredoxin] + 2 S-adenosyl-L-methionine = 2-methyladenosine(2503) in 23S rRNA + 5'-deoxyadenosine + L-methionine + 2 oxidized [2Fe-2S]-[ferredoxin] + S-adenosyl-L-homocysteine. The enzyme catalyses adenosine(37) in tRNA + 2 reduced [2Fe-2S]-[ferredoxin] + 2 S-adenosyl-L-methionine = 2-methyladenosine(37) in tRNA + 5'-deoxyadenosine + L-methionine + 2 oxidized [2Fe-2S]-[ferredoxin] + S-adenosyl-L-homocysteine. Specifically methylates position 2 of adenine 2503 in 23S rRNA and position 2 of adenine 37 in tRNAs. This is Probable dual-specificity RNA methyltransferase RlmN from Mycolicibacterium vanbaalenii (strain DSM 7251 / JCM 13017 / BCRC 16820 / KCTC 9966 / NRRL B-24157 / PYR-1) (Mycobacterium vanbaalenii).